The following is a 572-amino-acid chain: Mitochondrial chaperone TCM62 (572 aa).

The transit peptide at 1 to 16 (MLRNCLRKLGNHQTKC) directs the protein to the mitochondrion. Residues 17 to 471 (SVKTLHTPIY…KANEPNFMTK (455 aa)) are Mitochondrial matrix-facing. The chain crosses the membrane as a helical span at residues 472–488 (VGINAVLSAVILPSEVA). Residues 489–572 (FKNAYGYNYY…VYKKPERHKA (84 aa)) lie on the Mitochondrial intermembrane side of the membrane.

The protein belongs to the chaperonin (HSP60) family. In terms of assembly, forms a high molecular mass protein complex of approximately 850 kDa.

It is found in the mitochondrion inner membrane. Its function is as follows. Chaperone. Required for the assembly of succinate dehydrogenase subunits. Ensures mitochondrial gene expression at elevated temperatures and prevents heat-aggregation of the ribosomal subunit VAR1. This chain is Mitochondrial chaperone TCM62 (TCM62), found in Saccharomyces cerevisiae (strain YJM789) (Baker's yeast).